A 166-amino-acid polypeptide reads, in one-letter code: Large ribosomal subunit protein uL10 (166 aa).

As to quaternary structure, part of the ribosomal stalk of the 50S ribosomal subunit. The N-terminus interacts with L11 and 23S rRNA to form the base of the stalk. The C-terminus forms an elongated spine to which L12 dimers bind in a sequential fashion forming a pentameric L10(L12)2(L12)2 complex.

In terms of biological role, forms part of the ribosomal stalk, playing a central role in the interaction of the ribosome with GTP-bound translation factors (such as IF-2, EF-Tu, EF-G and RF3). In Bacillus subtilis (strain 168), this protein is Large ribosomal subunit protein uL10 (rplJ).